A 1219-amino-acid polypeptide reads, in one-letter code: N-acetylglucosamine-1-phosphotransferase subunits alpha/beta (1219 aa).

The helical transmembrane segment at 27–47 (LCFGGLVLMIVSAFQFGEVVV) threads the bilayer. 5 N-linked (GlcNAc...) asparagine glycosylation sites follow: Asn-88, Asn-119, Asn-153, Asn-292, and Asn-381. Intrachain disulfides connect Cys-443/Cys-466, Cys-457/Cys-473, Cys-508/Cys-531, and Cys-522/Cys-538. LNR repeat units follow at residues 443-478 (CAEGCPGSWIKDGYCDKACNNSACDWDGGDCQGSSR) and 508-538 (CNQGCANSWLADKFCDQACNVLACGFDVGDC). Asp-454 is a binding site for Ca(2+). A glycan (N-linked (GlcNAc...) asparagine) is linked at Asn-462. Positions 469, 472, 519, 534, and 537 each coordinate Ca(2+). Asn-554, Asn-610, Asn-617, Asn-645, Asn-696, Asn-726, Asn-823, and Asn-974 each carry an N-linked (GlcNAc...) asparagine glycan. A disordered region spans residues 640–666 (ELPKSNTSTPVRDKEEEPKPTVATPEP). The DMAP1-binding domain maps to 696-804 (NETLLPDEVK…DDVTTKAQSR (109 aa)). In terms of domain architecture, EF-hand spans 970 to 1005 (VQQLNISEVFDEIDTDHSGVLSDREIRTLATRIHEL). Residues Asp-983, Asp-985, Ser-987, and Glu-994 each coordinate Ca(2+). N-linked (GlcNAc...) asparagine glycosylation is found at Asn-1021, Asn-1029, and Asn-1094. The chain crosses the membrane as a helical span at residues 1180 to 1200 (VLVTLVVFTVMSFFAEQLVML).

This sequence belongs to the stealth family. In terms of assembly, hexamer of two alpha, two beta and two gamma (GNPTG) subunits; disulfide-linked. The alpha and/or the beta subunits of the enzyme constitute the catalytic subunits. Post-translationally, the alpha- and beta-subunits are generated by a proteolytic cleavage by mbtps1 protease at the Gln-893-Asp-894 bond.

The protein resides in the golgi apparatus membrane. The enzyme catalyses N(4)-[alpha-D-mannosyl-(1-&gt;2)-alpha-D-mannosyl-(glycan)]-L-asparaginyl-[protein] + UDP-N-acetyl-alpha-D-glucosamine = N(4)-[6-(N-acetyl-alpha-D-glucosaminyl-1-phospho)-alpha-D-mannosyl-(1-&gt;2)-alpha-D-mannosyl-(glycan)]-L-asparaginyl-[protein] + UMP + H(+). Functionally, catalyzes the formation of mannose 6-phosphate (M6P) markers on high mannose type oligosaccharides in the Golgi apparatus. M6P residues are required to bind to the M6P receptors (MPR), which mediate the vesicular transport of lysosomal enzymes to the endosomal/prelysosomal compartment. This is N-acetylglucosamine-1-phosphotransferase subunits alpha/beta (gnptab) from Danio rerio (Zebrafish).